Reading from the N-terminus, the 288-residue chain is MKMKAYAKINIALDAIGKREDNYHLLRMIMQTVDLYDVIDIEKSNDSNISISCNKHYVSTDERNLAYKAAVLFRDEFNIKDGVKINIKKNIPVAAGMAGGSTNAAAVLVIMNKLFNVNASLEVLKEIGLKIGADVPYCIEGGTALCEGIGEIITPLKPFENKILVVLKPNFGVSTKEVYTNLDINKIRKHVNIEGLIQAMENDDLDYVSKNMKNVLENVTLKKHTILKNIKEDMRKSGALGAMMSGSGPTVFAFFDDMLTAQRAFEFLKGKYKYSDVYITRTINSNNL.

K8 is a catalytic residue. Residue 92–102 (PVAAGMAGGST) coordinates ATP. D134 is an active-site residue.

It belongs to the GHMP kinase family. IspE subfamily.

The enzyme catalyses 4-CDP-2-C-methyl-D-erythritol + ATP = 4-CDP-2-C-methyl-D-erythritol 2-phosphate + ADP + H(+). It participates in isoprenoid biosynthesis; isopentenyl diphosphate biosynthesis via DXP pathway; isopentenyl diphosphate from 1-deoxy-D-xylulose 5-phosphate: step 3/6. Its function is as follows. Catalyzes the phosphorylation of the position 2 hydroxy group of 4-diphosphocytidyl-2C-methyl-D-erythritol. In Clostridium perfringens (strain 13 / Type A), this protein is 4-diphosphocytidyl-2-C-methyl-D-erythritol kinase.